A 346-amino-acid polypeptide reads, in one-letter code: Ferredoxin--NADP reductase (346 aa).

FAD contacts are provided by Glu-35, Gln-43, Tyr-48, Val-88, Phe-122, Asp-287, and Thr-327.

Belongs to the ferredoxin--NADP reductase type 2 family. As to quaternary structure, homodimer. FAD serves as cofactor.

The enzyme catalyses 2 reduced [2Fe-2S]-[ferredoxin] + NADP(+) + H(+) = 2 oxidized [2Fe-2S]-[ferredoxin] + NADPH. This chain is Ferredoxin--NADP reductase, found in Oenococcus oeni (strain ATCC BAA-331 / PSU-1).